Reading from the N-terminus, the 459-residue chain is Protein U54 (459 aa).

A signal peptide spans 1-20 (MQPATLQWSSYVLQLRLTTA). Residues Asn76, Asn100, Asn281, Asn321, and Asn452 are each glycosylated (N-linked (GlcNAc...) asparagine; by host).

It belongs to the herpesviridae UL82 family.

This is Protein U54 (U54) from Homo sapiens (Human).